The chain runs to 73 residues: Large ribosomal subunit protein bL27c (73 aa).

It belongs to the bacterial ribosomal protein bL27 family.

Its subcellular location is the plastid. It localises to the chloroplast. The sequence is that of Large ribosomal subunit protein bL27c (rpl27) from Haptolina hirta (Plankton alga).